The chain runs to 137 residues: Envelope glycoprotein L (137 aa).

Residues 1 to 25 form the signal peptide; the sequence is MRTVGVFLATCLVTIFVLPTWGNWA. An interaction with gH region spans residues 23-128; sequence NWAYPCCHVT…SVEDLFGANL (106 aa). Cystine bridges form between C28–C56 and C29–C79.

It belongs to the herpesviridae glycoprotein L family. In terms of assembly, interacts with glycoprotein H (gH); this interaction is necessary for the correct processing and cell surface expression of gH. The heterodimer gH/gL seems to interact with gB trimers during fusion. The heterodimer gH/gL interacts with host EPHA2 to facilitate virus internalization and fusion.

Its subcellular location is the virion membrane. The protein resides in the host cell membrane. It localises to the host Golgi apparatus. The protein localises to the host trans-Golgi network. Functionally, the heterodimer glycoprotein H-glycoprotein L is required for the fusion of viral and plasma membranes leading to virus entry into the host cell. Acts as a functional inhibitor of gH and maintains gH in an inhibited form. Upon binding to host integrins, gL dissociates from gH leading to activation of the viral fusion glycoproteins gB and gH. The heterodimer gH/gL targets also host EPHA2 to promote viral entry. This Epstein-Barr virus (strain AG876) (HHV-4) protein is Envelope glycoprotein L.